We begin with the raw amino-acid sequence, 495 residues long: Bile acid-sensitive ion channel (495 aa).

The binds the plasma membrane and stabilizes the channel in the closed state stretch occupies residues 1-30 (MEHTEKSKGPAEKGLLGKIRRYLSKRPLPS). Over 1–61 (MEHTEKSKGP…NIAQNQNKVR (61 aa)) the chain is Cytoplasmic. A helical transmembrane segment spans residues 62-82 (KVIWLSVVLGSVSLLVWQIYS). Residues 83-459 (RLVNYFMWPT…GLFCGASLIT (377 aa)) lie on the Extracellular side of the membrane. 6 disulfides stabilise this stretch: cysteine 112–cysteine 207, cysteine 185–cysteine 192, cysteine 298–cysteine 377, cysteine 315–cysteine 373, cysteine 328–cysteine 350, and cysteine 330–cysteine 342. Asparagine 147 and asparagine 163 each carry an N-linked (GlcNAc...) asparagine glycan. Asparagine 306 carries an N-linked (GlcNAc...) asparagine glycan. N-linked (GlcNAc...) asparagine glycosylation is found at asparagine 370, asparagine 405, and asparagine 421. The GAS motif; ion selectivity filter motif lies at 454-456 (GAS). Residues 460–480 (IIEIIEYLFTSFYWVFIFFLL) traverse the membrane as a helical segment. Over 481–495 (KILEMIQRTSPPQTV) the chain is Cytoplasmic.

It belongs to the amiloride-sensitive sodium channel (TC 1.A.6) family. ASIC5 subfamily. In terms of assembly, forms homotrimeric channels. Expressed by cholangiocytes (at protein level). Detected in brain, liver, duodenum, jejunum, ileum and testis.

The protein localises to the apical cell membrane. The protein resides in the cell membrane. The enzyme catalyses Na(+)(in) = Na(+)(out). It catalyses the reaction Li(+)(in) = Li(+)(out). It carries out the reaction K(+)(in) = K(+)(out). The catalysed reaction is H(+)(in) = H(+)(out). Its activity is regulated as follows. Inhibited by the diuretic drug amiloride. Inhibited by diminazene. Inhibited by extracellular Ca(2+). In terms of biological role, forms bile acid-gated sodium channels and may play a role in bile acid-dependent absorption and secretion by epithelial cells of the bile ducts. Displays high selectivity for sodium ions but can also permit the permeation of other cations. The gating could be indirect and the consequence of alterations of the membrane environment of the channel by bile acids. As a sodium channel of type II unipolar brush cells of the vestibulocerebellum, controlling the electrical activity of these cells, could play a role in motor coordination and balance. In Rattus norvegicus (Rat), this protein is Bile acid-sensitive ion channel.